Consider the following 434-residue polypeptide: Gamma-enolase (434 aa).

Serine 2 carries the post-translational modification N-acetylserine. Position 5 is an N6-acetyllysine (lysine 5). Phosphothreonine is present on threonine 26. Serine 40 provides a ligand contact to Mg(2+). Phosphotyrosine is present on tyrosine 44. An N6-acetyllysine; alternate modification is found at lysine 60. Lysine 60 carries the post-translational modification N6-succinyllysine; alternate. Position 64 is an N6-acetyllysine (lysine 64). Lysine 89 carries the N6-acetyllysine; alternate modification. Lysine 89 bears the N6-succinyllysine; alternate mark. Residues histidine 158 and glutamate 167 each coordinate substrate. N6-acetyllysine occurs at positions 193, 197, and 199. Lysine 202 is modified (N6-acetyllysine; alternate). Lysine 202 participates in a covalent cross-link: Glycyl lysine isopeptide (Lys-Gly) (interchain with G-Cter in SUMO2); alternate. Glutamate 210 (proton donor) is an active-site residue. Residues lysine 228 and lysine 233 each carry the N6-acetyllysine; alternate modification. An N6-succinyllysine; alternate modification is found at lysine 228. Lysine 233 bears the N6-(2-hydroxyisobutyryl)lysine; alternate mark. Residue aspartate 245 coordinates Mg(2+). Lysine 256 is subject to N6-acetyllysine. Serine 263 is modified (phosphoserine). A Phosphotyrosine modification is found at tyrosine 287. Position 291 is a phosphoserine (serine 291). Mg(2+) is bound by residues glutamate 293 and aspartate 318. Substrate contacts are provided by glutamate 293 and aspartate 318. N6-acetyllysine occurs at positions 335 and 343. The active-site Proton acceptor is the lysine 343. Substrate contacts are provided by residues serine 370–serine 373 and lysine 394. Lysine 406 bears the N6-acetyllysine mark.

Belongs to the enolase family. Mammalian enolase is composed of 3 isozyme subunits, alpha, beta and gamma, which can form homodimers or heterodimers which are cell-type and development-specific. The cofactor is Mg(2+). In terms of tissue distribution, skeletal muscle (at protein level). The alpha/alpha homodimer is expressed in embryo and in most adult tissues. The alpha/beta heterodimer and the beta/beta homodimer are found in striated muscle, and the alpha/gamma heterodimer and the gamma/gamma homodimer in neurons.

It is found in the cytoplasm. The protein localises to the cell membrane. The enzyme catalyses (2R)-2-phosphoglycerate = phosphoenolpyruvate + H2O. It participates in carbohydrate degradation; glycolysis; pyruvate from D-glyceraldehyde 3-phosphate: step 4/5. Has neurotrophic and neuroprotective properties on a broad spectrum of central nervous system (CNS) neurons. Binds, in a calcium-dependent manner, to cultured neocortical neurons and promotes cell survival. In Mus musculus (Mouse), this protein is Gamma-enolase (Eno2).